The following is a 155-amino-acid chain: Gene 27 protein (155 aa).

The segment at 41–114 (KAKTQGMNVP…KAPENPNLPN (74 aa)) is disordered. Composition is skewed to basic and acidic residues over residues 55–68 (KKPE…EKPT) and 78–95 (TAKE…ETKA).

In terms of biological role, required for late gene transcription and DNA replication. This chain is Gene 27 protein (27), found in Bacillus subtilis (Bacteriophage SP01).